The chain runs to 412 residues: Peptidase T (412 aa).

His-83 contacts Zn(2+). Asp-85 is an active-site residue. Asp-145 contributes to the Zn(2+) binding site. The active-site Proton acceptor is the Glu-179. 3 residues coordinate Zn(2+): Glu-180, Asp-202, and His-384.

Belongs to the peptidase M20B family. Zn(2+) serves as cofactor.

It localises to the cytoplasm. It carries out the reaction Release of the N-terminal residue from a tripeptide.. In terms of biological role, cleaves the N-terminal amino acid of tripeptides. This Fusobacterium nucleatum subsp. nucleatum (strain ATCC 25586 / DSM 15643 / BCRC 10681 / CIP 101130 / JCM 8532 / KCTC 2640 / LMG 13131 / VPI 4355) protein is Peptidase T.